The primary structure comprises 427 residues: Trigger factor (427 aa).

One can recognise a PPIase FKBP-type domain in the interval 163-248 (GDTVVIDFVG…IHEVKEKEVP (86 aa)).

Belongs to the FKBP-type PPIase family. Tig subfamily.

The protein resides in the cytoplasm. The catalysed reaction is [protein]-peptidylproline (omega=180) = [protein]-peptidylproline (omega=0). Involved in protein export. Acts as a chaperone by maintaining the newly synthesized protein in an open conformation. Functions as a peptidyl-prolyl cis-trans isomerase. The protein is Trigger factor of Streptococcus gordonii (strain Challis / ATCC 35105 / BCRC 15272 / CH1 / DL1 / V288).